Consider the following 267-residue polypeptide: Ribosomal RNA small subunit methyltransferase A (267 aa).

5 residues coordinate S-adenosyl-L-methionine: leucine 20, glycine 45, glutamate 68, aspartate 91, and asparagine 113.

This sequence belongs to the class I-like SAM-binding methyltransferase superfamily. rRNA adenine N(6)-methyltransferase family. RsmA subfamily.

Its subcellular location is the cytoplasm. The catalysed reaction is adenosine(1518)/adenosine(1519) in 16S rRNA + 4 S-adenosyl-L-methionine = N(6)-dimethyladenosine(1518)/N(6)-dimethyladenosine(1519) in 16S rRNA + 4 S-adenosyl-L-homocysteine + 4 H(+). Specifically dimethylates two adjacent adenosines (A1518 and A1519) in the loop of a conserved hairpin near the 3'-end of 16S rRNA in the 30S particle. May play a critical role in biogenesis of 30S subunits. This is Ribosomal RNA small subunit methyltransferase A from Blochmanniella pennsylvanica (strain BPEN).